A 704-amino-acid chain; its full sequence is Elongation factor G (704 aa).

The tr-type G domain maps to 10–290 (KKVRNIGIMA…AVVDYLPSPL (281 aa)). Residues 19-26 (AHIDAGKT), 83-87 (DTPGH), and 137-140 (NKMD) contribute to the GTP site.

This sequence belongs to the TRAFAC class translation factor GTPase superfamily. Classic translation factor GTPase family. EF-G/EF-2 subfamily.

The protein resides in the cytoplasm. Functionally, catalyzes the GTP-dependent ribosomal translocation step during translation elongation. During this step, the ribosome changes from the pre-translocational (PRE) to the post-translocational (POST) state as the newly formed A-site-bound peptidyl-tRNA and P-site-bound deacylated tRNA move to the P and E sites, respectively. Catalyzes the coordinated movement of the two tRNA molecules, the mRNA and conformational changes in the ribosome. The polypeptide is Elongation factor G (Kocuria rhizophila (strain ATCC 9341 / DSM 348 / NBRC 103217 / DC2201)).